A 260-amino-acid polypeptide reads, in one-letter code: Alpha- and beta-fibrinogenase OhS1 (260 aa).

Positions 1 to 18 are cleaved as a signal peptide; that stretch reads MALIRVLASLLILQLSYA. The propeptide occupies 19-24; it reads VTPFDR. Residues 25 to 248 form the Peptidase S1 domain; that stretch reads IIGGFECNEY…YIDWIEGIIA (224 aa). Cystine bridges form between Cys31-Cys163, Cys50-Cys66, Cys98-Cys255, Cys142-Cys209, Cys174-Cys188, and Cys199-Cys224. The N-linked (GlcNAc...) asparagine glycan is linked to Asn44. The Charge relay system role is filled by His65. Asn79 carries an N-linked (GlcNAc...) asparagine glycan. The active-site Charge relay system is the Asp110. Asn117 and Asn121 each carry an N-linked (GlcNAc...) asparagine glycan. Ser203 functions as the Charge relay system in the catalytic mechanism. Asn250 is a glycosylation site (N-linked (GlcNAc...) asparagine).

It belongs to the peptidase S1 family. Snake venom subfamily. Monomer. Expressed by the venom gland.

It localises to the secreted. Completely inhibited by NPGB, PMSF, diisopropylfluorophosphate (DFP), benzamidine and soybean trypsin inhibitor. Not inhibited by EDTA. Its function is as follows. Snake venom serine protease that possesses potent fibrinogenolytic (on both alpha- (FGA) and beta-chains (FGB)) and amidolytic activities. Selectively cleaves Arg-|-Xaa or Lys-|-Xaa bonds. The polypeptide is Alpha- and beta-fibrinogenase OhS1 (Ophiophagus hannah (King cobra)).